The chain runs to 448 residues: Adenylosuccinate synthetase (448 aa).

GTP contacts are provided by residues 36–42 (GDEGKGK) and 64–66 (GHT). Residue Asp37 is the Proton acceptor of the active site. Asp37 and Gly64 together coordinate Mg(2+). IMP is bound by residues 37 to 40 (DEGK), 62 to 65 (NAGH), Thr154, Arg168, Asn246, Thr261, and Arg325. His65 acts as the Proton donor in catalysis. A substrate-binding site is contributed by 321 to 327 (VTTKRKR). Residues Arg327, 353–355 (KLD), and 436–438 (GVG) contribute to the GTP site.

The protein belongs to the adenylosuccinate synthetase family. Homodimer. Mg(2+) serves as cofactor.

It is found in the cytoplasm. The catalysed reaction is IMP + L-aspartate + GTP = N(6)-(1,2-dicarboxyethyl)-AMP + GDP + phosphate + 2 H(+). It functions in the pathway purine metabolism; AMP biosynthesis via de novo pathway; AMP from IMP: step 1/2. Its function is as follows. Plays an important role in the de novo pathway and in the salvage pathway of purine nucleotide biosynthesis. Catalyzes the first committed step in the biosynthesis of AMP from IMP. The polypeptide is Adenylosuccinate synthetase (Drosophila mojavensis (Fruit fly)).